A 690-amino-acid polypeptide reads, in one-letter code: Rho guanine nucleotide exchange factor 4 (690 aa).

The tract at residues 73–126 is ABR (APC-binding region) domain; the sequence is KTQRKKLQKQAHVERRLHIGAVHKDGVKCWRKTIITSPESLNLPRRSHPLSQSA. A disordered region spans residues 113–145; sequence LNLPRRSHPLSQSAPTGLNHMGWPEHTPGTAMP. One can recognise an SH3 domain in the interval 194–253; that stretch reads GSVVCAEALWDHVTMDDQELGFKAGDVIEVMDATNREWWWGRVADGEGWFPASFVRLRVN. A disordered region spans residues 257–282; it reads PADDDAPLAGNSGAEDGGAEAQSSKD. A DH domain is found at 284–468; it reads MRTNVINEIL…KNVAQLINER (185 aa). The region spanning 499 to 606 is the PH domain; sequence ELIYSGELTR…WLKAFARERE (108 aa).

In terms of assembly, isoform 3 interacts with RHOA and RAC1, and (via ABR domain) with APC. Found in a complex consisting of ARHGEF4, APC and CTNNB1. As to expression, expressed at high levels in the brain, skeletal muscle and testis and at low levels in the kidney, lung, small intestine, ovary and prostate. Expression is aberrantly enhanced in most colorectal tumors.

The protein resides in the cytoplasm. Its subcellular location is the cell projection. It is found in the ruffle membrane. Acts as a guanine nucleotide exchange factor (GEF) for RHOA, RAC1 and CDC42 GTPases. Binding of APC may activate RAC1 GEF activity. The APC-ARHGEF4 complex seems to be involved in cell migration as well as in E-cadherin-mediated cell-cell adhesion. Required for MMP9 up-regulation via the JNK signaling pathway in colorectal tumor cells. Involved in tumor angiogenesis and may play a role in intestinal adenoma formation and tumor progression. The chain is Rho guanine nucleotide exchange factor 4 (ARHGEF4) from Homo sapiens (Human).